The primary structure comprises 288 residues: Cyclin-dependent kinase 2 homolog (288 aa).

The 281-residue stretch at 4 to 284 (YHGLEKIGEG…AKEALQHAYF (281 aa)) folds into the Protein kinase domain. Residues 10–18 (IGEGTYGVV) and Lys32 each bind ATP. Thr14 is modified (phosphothreonine). Tyr15 is modified (phosphotyrosine). The Proton acceptor role is filled by Asp125. At Thr158 the chain carries Phosphothreonine.

It belongs to the protein kinase superfamily. CMGC Ser/Thr protein kinase family. CDC2/CDKX subfamily. May form a complex composed of at least the catalytic subunit CRK2 and a cyclin. Mg(2+) serves as cofactor.

The protein resides in the cytoplasm. It carries out the reaction L-seryl-[protein] + ATP = O-phospho-L-seryl-[protein] + ADP + H(+). The catalysed reaction is L-threonyl-[protein] + ATP = O-phospho-L-threonyl-[protein] + ADP + H(+). The enzyme catalyses [DNA-directed RNA polymerase] + ATP = phospho-[DNA-directed RNA polymerase] + ADP + H(+). Phosphorylation at Thr-14 or Tyr-15 inactivates the enzyme, while phosphorylation at Thr-158 activates it. Functionally, serine/threonine-protein kinase. Involved in the control of the cell cycle. Required for entry into S-phase and mitosis. Probable component of the kinase complex that phosphorylates the repetitive C-terminus of RNA polymerase II. This chain is Cyclin-dependent kinase 2 homolog, found in Plasmodium knowlesi (strain H).